The primary structure comprises 88 residues: Small ribosomal subunit protein bS16 (88 aa).

This sequence belongs to the bacterial ribosomal protein bS16 family.

The protein is Small ribosomal subunit protein bS16 of Mycoplasma pneumoniae (strain ATCC 29342 / M129 / Subtype 1) (Mycoplasmoides pneumoniae).